The sequence spans 1219 residues: MAILKRGARKKVHQEPAKRSANIKKATFDSSKKKEVGVSDLTLLSKISDEAINENLKKRFLNATIYTYIGHVLISVNPFRDLGIYTDAVMNEYKGKNRLEVPPHVFAIAESMYYNMKSYNENQCVIISGESGAGKTEAAKRIMQYIAAASSTHTESIGKIKDMVLATNPLLESFGCAKTLRNNNSSRHGKYLEIKFNNQFEPCAGNITNYLLEKQRVVSQIKNERNFHIFYQFTKGASDAYRQTFGVQKPEQYVYTAAAGCISAETIDDLQDYQETLKAMRVIGLGQEEQDQIFRMLAAILWIGNVSFIENEEGNAQVRDTSVTDFVAYLLQIDSQLLIKSLVERIMETNHGMKRGSVYHVPLNIVQADAVRDALAKAIYNNLFDWIVSRVNKSLQAFPGAEKSIGILDIYGFEIFEHNSFEQICINYVNEKLQQIFIQLTLKSEQETYEREKIQWTPIKYFDNKVVCDLIEARRPPGIFAAMNDSVATAHADSNAADQAFAQRLNLFTTNPHFDLRSNKFVIKHYAGDVTYDIDGITDKNKDQLQKDLVELIGTTTNTFLATIFPDTVDRESKRRPPTAGDKIIKSANDLVETLSKAQPSYIRTIKPNETKSPNDYDDRQVLHQIKYLGLQENVRIRRAGFAYRQVFEKFVERFYLLSPHCSYAGDYTWQGDTLDAVKYILQDSSIPQQEYQLGVTSVFIKTPETLFALEHMRDRYWHNMAARIQRAWRRFLQRRIDAATKIQRTIRERKEGNKYEKLRDYGTKVLGGRKERRSMSLLGYRAFMGDYLSCNESKSKGAYIKRQVSIKEKVIFSIHGEALHTKFGRSAQRLKKTFLLTPTTLYIVGQTLVQNAMTYTQDYKIDVRNIQAVSLTNLQDDWVAIKLASSGQPDPLINTYFKTELITHLKRLNDKIQIKIGSAIEYQKKPGKLHSVKCQINESAPKYGDIYKSSTISVRRGNPPNSQVHKKPRKKSSISSGYHASSSQATRRPVSIAAAQHVPTAPASRHSKKPAPPPPGMQNKAATRRSVPNPASTLTASQSNARPSPPTAATRATPAATPAAAAMGSGRQANIPPPPPPPPPSSKPKEPMFEAAYDFPGSGSPSELPLKKGDVIYITREEPSGWSLGKLLDGSKEGWVPTAYMKPHSGNNNIPTPPQNRDVPKPVLNSVQHDNTSANVIPAAAQASLGDGLANALAARANKMRLESDDEEANEDEEEDDW.

A compositionally biased stretch (basic residues) spans 1–12; it reads MAILKRGARKKV. The segment at 1–20 is disordered; the sequence is MAILKRGARKKVHQEPAKRS. The Myosin motor domain maps to 36–715; it reads VGVSDLTLLS…TLFALEHMRD (680 aa). 129–136 lines the ATP pocket; the sequence is GESGAGKT. S357 carries the phosphoserine modification. Y359 bears the Phosphotyrosine mark. Positions 404–486 are actin-binding; the sequence is SIGILDIYGF…PGIFAAMNDS (83 aa). IQ domains follow at residues 719 to 739 and 740 to 765; these read HNMAARIQRAWRRFLQRRIDA and ATKIQRTIRERKEGNKYEKLRDYGTK. Positions 771-961 constitute a TH1 domain; that stretch reads KERRSMSLLG…TISVRRGNPP (191 aa). Phosphoserine is present on S777. The span at 951–964 shows a compositional bias: polar residues; it reads STISVRRGNPPNSQ. 2 disordered regions span residues 951 to 1106 and 1139 to 1167; these read STIS…SELP and TAYMKPHSGNNNIPTPPQNRDVPKPVLNS. Residues 974–984 are compositionally biased toward low complexity; sequence SISSGYHASSS. At S992 the chain carries Phosphoserine. The span at 1030 to 1041 shows a compositional bias: polar residues; the sequence is NPASTLTASQSN. Over residues 1048–1063 the composition is skewed to low complexity; sequence TAATRATPAATPAAAA. Pro residues predominate over residues 1072-1083; sequence IPPPPPPPPPSS. The SH3 domain occupies 1085–1147; the sequence is PKEPMFEAAY…PTAYMKPHSG (63 aa). Position 1205 is a phosphoserine (S1205).

It belongs to the TRAFAC class myosin-kinesin ATPase superfamily. Myosin family. Interacts (via myosin motor domain) with SHE4; this interaction is important for proper localization and may regulate the interaction of the motor domain with actin. Interacts (via SH3 domain) with VRP1; this interaction is required for localization to sites of polarized growth and may regulate the interaction of the tail domain with actin. Interacts (via SH3 domain) with PAN1; this interaction is important for late stages of endocytopsis. Interacts (via SH3 domain) with BBC1 and LAS17. Interacts (via C-terminal acidic tail) with ARC19 and ARC40; ARC19 and ARC40 are Arp2/3 complex subunits. Interacts with BZZ1, PKH1, PKH2, YPK1 and YPK2. Phosphorylation of the TEDS site (Ser-357) is required for the polarization of the actin cytoskeleton and for ligand-induced, but not for constitutive internalization of STE2. Phosphorylation probably activates the myosin-I ATPase activity. Ser-357 is phosphorylated by YPK2 in vitro.

The protein localises to the cytoplasm. The protein resides in the cytoskeleton. Its subcellular location is the actin patch. One of two redundant type-I myosins implicated in the organization of the actin cytoskeleton. Required for proper actin cytoskeleton polarization and for the internalization step in endocytosis. At the cell cortex, assembles in patch-like structures together with proteins from the actin-polymerizing machinery and promotes actin assembly. Functions redundantly with LAS17 as actin nucleation-promoting factor (NPF) for the Arp2/3 complex. Motor domain phosphorylation by PAK kinases CLA4 and STE20 promotes CDC42-regulated actin assembly. Functions together with the NPF PAN1 in late stages of endocytosis. Motor domain phosphorylation by PDK1 kinases PKH1 and PKH2, and by SGK kinases YPK1 and YPK2, promotes ligand-induced, but not constitutive endocytosis of the G protein-coupled receptor STE2. This Saccharomyces cerevisiae (strain YJM789) (Baker's yeast) protein is Myosin-5 (MYO5).